Consider the following 98-residue polypeptide: Co-chaperonin GroES 3 (98 aa).

It belongs to the GroES chaperonin family. Heptamer of 7 subunits arranged in a ring. Interacts with the chaperonin GroEL.

It localises to the cytoplasm. Together with the chaperonin GroEL, plays an essential role in assisting protein folding. The GroEL-GroES system forms a nano-cage that allows encapsulation of the non-native substrate proteins and provides a physical environment optimized to promote and accelerate protein folding. GroES binds to the apical surface of the GroEL ring, thereby capping the opening of the GroEL channel. The protein is Co-chaperonin GroES 3 of Mesorhizobium japonicum (strain LMG 29417 / CECT 9101 / MAFF 303099) (Mesorhizobium loti (strain MAFF 303099)).